Here is a 335-residue protein sequence, read N- to C-terminus: 2,4-dienoyl-CoA reductase [(3E)-enoyl-CoA-producing], mitochondrial (335 aa).

A mitochondrion-targeting transit peptide spans 1–34; the sequence is MKLPARVFFTLGSRLPCGLAPRRFFSYGTKILYQ. 2 positions are modified to N6-acetyllysine; alternate: lysine 42 and lysine 49. Residues lysine 42 and lysine 49 each carry the N6-succinyllysine; alternate modification. 66–71 contacts NADP(+); it reads GGGTGL. A Phosphothreonine modification is found at threonine 69. At lysine 73 the chain carries N6-succinyllysine. Arginine 91 contacts NADP(+). Residue arginine 91 coordinates substrate. An N6-acetyllysine; alternate modification is found at lysine 97. Lysine 97 carries the post-translational modification N6-succinyllysine; alternate. NADP(+) is bound at residue aspartate 117. Substrate is bound by residues arginine 119, phenylalanine 149, and serine 157. Tyrosine 199 (proton acceptor) is an active-site residue. Lysine 214 is an NADP(+) binding site. Lysine 230 carries the N6-acetyllysine modification. Residue 240–243 coordinates NADP(+); the sequence is PGPI. Lysine 244 carries the post-translational modification N6-acetyllysine; alternate. Position 244 is an N6-succinyllysine; alternate (lysine 244). Arginine 251 is a substrate binding site. Lysine 260 and lysine 319 each carry N6-acetyllysine; alternate. 2 positions are modified to N6-succinyllysine; alternate: lysine 260 and lysine 319.

It belongs to the short-chain dehydrogenases/reductases (SDR) family. 2,4-dienoyl-CoA reductase subfamily. In terms of assembly, homotetramer. As to expression, heart = liver = pancreas &gt; kidney &gt;&gt; skeletal muscle = lung.

It is found in the mitochondrion. The enzyme catalyses a (2E,4E)-dienoyl-CoA + NADPH + H(+) = a 4,5-saturated-(3E)-enoyl-CoA + NADP(+). It carries out the reaction a (2E,4Z)-dienoyl-CoA + NADPH + H(+) = a 4,5-saturated-(3E)-enoyl-CoA + NADP(+). The catalysed reaction is (2E,4E)-hexadienoyl-CoA + NADPH + H(+) = (3E)-hexenoyl-CoA + NADP(+). Functionally, auxiliary enzyme of beta-oxidation. It participates in the metabolism of unsaturated fatty enoyl-CoA esters having double bonds in both even- and odd-numbered positions in mitochondria. Catalyzes the NADP-dependent reduction of 2,4-dienoyl-CoA to yield trans-3-enoyl-CoA. This Homo sapiens (Human) protein is 2,4-dienoyl-CoA reductase [(3E)-enoyl-CoA-producing], mitochondrial (DECR1).